The chain runs to 856 residues: MSASVTSSDGRGPASPTSSSTGASTNPATSGLAAALKGATLAFQHQQRTAAKGSDTAVPRPHGGSRVPTPGTGSVSTSTSRTVGGSNGARLAATLAAREHSPPTTSKNEASRVVTSTPSSSSSVGSAGRTNRQELHGQATGGSSQQQQQQQHVEERANDHAPSKRPAMRSRRPSLASLSSQAVDNSHSHPPTPASAKPSSEPKSVSWIAATLAATSIAPTTSLVAMFDGKQEEAETATKKKKKKKPRPASKTQHHQTLTSPSPTPSEGLSIENQCGTGGVPSVASGKSKVAPKPKPKPRRDISLSTVESIKSSTGAMGRDGKSSNQEQGETRNRNGDVRDKPSREGGKVTVTGAKDIVFEGTSERRSQQKVPATPRSVQSKQGVEVPTDKRPSTPPVSQHAQISETTIISPQPRRVVSTPRLESSPAVPKTYKTVTNPRPDNKPTIRKSSRVVSPSVDQSQTIRQSAETGLGDRHTSRNSTSSDETFVSASSSPSPRPQTPTKELERVRPRLDRANTSTSSRASRVSTPASVRSPASQTRPSPVLRPGTGLYSYSTGASPTPEMSLDSLTNAMIASNLASSRLTALTQTSLESPGLPPVPPPRRGHRHHHLPHPHLRHRTQSPPHARPLIPQRTADSLPVRTGPSRQTEHTQPASLLKTLRAPRSLSDDEDLRLQTHRHRKKHLGGKKHAHNEGARRRWRDEMTIRQRRRYEAVWASNRGLFLRPGFAFEHPENWQPLPPPDDSLGQVDLSRAWESPEADLVVNVVVRDIWSRSRLPVDELAEVWELVDRRKCGALDKQEFVVGMWLIDQRLRGRKIPTVVGEGVWESAMDRVLSVNVKAPKAHKGRTKGHLKGVF.

3 disordered regions span residues 1–204, 230–563, and 589–672; these read MSAS…EPKS, KQEE…PTPE, and TSLE…DEDL. Composition is skewed to low complexity over residues 12–42, 67–84, and 111–130; these read GPAS…ATLA, VPTP…RTVG, and SRVV…AGRT. Over residues 152 to 162 the composition is skewed to basic and acidic residues; sequence HVEERANDHAP. The span at 194 to 204 shows a compositional bias: low complexity; sequence ASAKPSSEPKS. Positions 239 to 254 are enriched in basic residues; the sequence is KKKKKKKPRPASKTQH. Composition is skewed to polar residues over residues 255–275 and 303–315; these read HQTL…ENQC and SLST…SSTG. Basic and acidic residues predominate over residues 329 to 347; that stretch reads GETRNRNGDVRDKPSREGG. Polar residues-rich tracts occupy residues 396-410, 451-468, and 478-488; these read PVSQ…TIIS, RVVS…QSAE, and RNSTSSDETFV. Residues 503 to 514 show a composition bias toward basic and acidic residues; it reads KELERVRPRLDR. Residues 517–535 show a composition bias toward low complexity; sequence TSTSSRASRVSTPASVRSP. The segment covering 603–620 has biased composition (basic residues); sequence RRGHRHHHLPHPHLRHRT. Positions 644–654 are enriched in polar residues; that stretch reads PSRQTEHTQPA. Residues 743–832 form the EH domain; it reads DSLGQVDLSR…EGVWESAMDR (90 aa).

Belongs to the IRS4 family.

Functionally, positive regulator of phosphatidylinositol 4,5-bisphosphate turnover and negatively regulates signaling through the cell integrity pathway. Involved in rDNA silencing. The sequence is that of Increased rDNA silencing protein 4 (irs-4) from Neurospora crassa (strain ATCC 24698 / 74-OR23-1A / CBS 708.71 / DSM 1257 / FGSC 987).